The primary structure comprises 74 residues: Tetrahydromethanopterin S-methyltransferase subunit G (74 aa).

The chain crosses the membrane as a helical span at residues 50–70 (IGILYGLVIGLYLCMLYILLG).

It belongs to the MtrG family. The complex is composed of 8 subunits; MtrA, MtrB, MtrC, MtrD, MtrE, MtrF, MtrG and MtrH.

Its subcellular location is the cell membrane. It carries out the reaction 5-methyl-5,6,7,8-tetrahydromethanopterin + coenzyme M + 2 Na(+)(in) = 5,6,7,8-tetrahydromethanopterin + methyl-coenzyme M + 2 Na(+)(out). It participates in one-carbon metabolism; methanogenesis from CO(2); methyl-coenzyme M from 5,10-methylene-5,6,7,8-tetrahydromethanopterin: step 2/2. In terms of biological role, part of a complex that catalyzes the formation of methyl-coenzyme M and tetrahydromethanopterin from coenzyme M and methyl-tetrahydromethanopterin. This is an energy-conserving, sodium-ion translocating step. This is Tetrahydromethanopterin S-methyltransferase subunit G from Methanopyrus kandleri (strain AV19 / DSM 6324 / JCM 9639 / NBRC 100938).